A 267-amino-acid polypeptide reads, in one-letter code: GTP cyclohydrolase FolE2 2 (267 aa).

Belongs to the GTP cyclohydrolase IV family.

It carries out the reaction GTP + H2O = 7,8-dihydroneopterin 3'-triphosphate + formate + H(+). It functions in the pathway cofactor biosynthesis; 7,8-dihydroneopterin triphosphate biosynthesis; 7,8-dihydroneopterin triphosphate from GTP: step 1/1. Converts GTP to 7,8-dihydroneopterin triphosphate. In Cupriavidus metallidurans (strain ATCC 43123 / DSM 2839 / NBRC 102507 / CH34) (Ralstonia metallidurans), this protein is GTP cyclohydrolase FolE2 2.